Consider the following 358-residue polypeptide: UDP-N-acetylglucosamine--N-acetylmuramyl-(pentapeptide) pyrophosphoryl-undecaprenol N-acetylglucosamine transferase (358 aa).

UDP-N-acetyl-alpha-D-glucosamine-binding positions include 12–14, Arg-165, Ser-195, and Gln-290; that span reads TAG.

Belongs to the glycosyltransferase 28 family. MurG subfamily.

Its subcellular location is the cell membrane. It carries out the reaction di-trans,octa-cis-undecaprenyl diphospho-N-acetyl-alpha-D-muramoyl-L-alanyl-D-glutamyl-meso-2,6-diaminopimeloyl-D-alanyl-D-alanine + UDP-N-acetyl-alpha-D-glucosamine = di-trans,octa-cis-undecaprenyl diphospho-[N-acetyl-alpha-D-glucosaminyl-(1-&gt;4)]-N-acetyl-alpha-D-muramoyl-L-alanyl-D-glutamyl-meso-2,6-diaminopimeloyl-D-alanyl-D-alanine + UDP + H(+). Its pathway is cell wall biogenesis; peptidoglycan biosynthesis. Cell wall formation. Catalyzes the transfer of a GlcNAc subunit on undecaprenyl-pyrophosphoryl-MurNAc-pentapeptide (lipid intermediate I) to form undecaprenyl-pyrophosphoryl-MurNAc-(pentapeptide)GlcNAc (lipid intermediate II). This is UDP-N-acetylglucosamine--N-acetylmuramyl-(pentapeptide) pyrophosphoryl-undecaprenol N-acetylglucosamine transferase from Clostridium tetani (strain Massachusetts / E88).